The chain runs to 158 residues: Ribosome maturation factor RimP (158 aa).

It belongs to the RimP family.

Its subcellular location is the cytoplasm. Its function is as follows. Required for maturation of 30S ribosomal subunits. This is Ribosome maturation factor RimP from Leuconostoc mesenteroides subsp. mesenteroides (strain ATCC 8293 / DSM 20343 / BCRC 11652 / CCM 1803 / JCM 6124 / NCDO 523 / NBRC 100496 / NCIMB 8023 / NCTC 12954 / NRRL B-1118 / 37Y).